Consider the following 348-residue polypeptide: Uroporphyrinogen decarboxylase (348 aa).

Residues 27–31, Phe-46, Asp-76, Tyr-152, Ser-207, and His-320 contribute to the substrate site; that span reads RQAGR.

It belongs to the uroporphyrinogen decarboxylase family. Homodimer.

It is found in the cytoplasm. It carries out the reaction uroporphyrinogen III + 4 H(+) = coproporphyrinogen III + 4 CO2. It participates in porphyrin-containing compound metabolism; protoporphyrin-IX biosynthesis; coproporphyrinogen-III from 5-aminolevulinate: step 4/4. Functionally, catalyzes the decarboxylation of four acetate groups of uroporphyrinogen-III to yield coproporphyrinogen-III. The sequence is that of Uroporphyrinogen decarboxylase from Bacillus cereus (strain AH820).